The primary structure comprises 367 residues: UDP-N-acetylglucosamine--N-acetylmuramyl-(pentapeptide) pyrophosphoryl-undecaprenol N-acetylglucosamine transferase (367 aa).

UDP-N-acetyl-alpha-D-glucosamine-binding positions include 15-17 (TGG), N127, R163, S191, I249, and Q294.

Belongs to the glycosyltransferase 28 family. MurG subfamily.

It localises to the cell inner membrane. It catalyses the reaction di-trans,octa-cis-undecaprenyl diphospho-N-acetyl-alpha-D-muramoyl-L-alanyl-D-glutamyl-meso-2,6-diaminopimeloyl-D-alanyl-D-alanine + UDP-N-acetyl-alpha-D-glucosamine = di-trans,octa-cis-undecaprenyl diphospho-[N-acetyl-alpha-D-glucosaminyl-(1-&gt;4)]-N-acetyl-alpha-D-muramoyl-L-alanyl-D-glutamyl-meso-2,6-diaminopimeloyl-D-alanyl-D-alanine + UDP + H(+). Its pathway is cell wall biogenesis; peptidoglycan biosynthesis. Its function is as follows. Cell wall formation. Catalyzes the transfer of a GlcNAc subunit on undecaprenyl-pyrophosphoryl-MurNAc-pentapeptide (lipid intermediate I) to form undecaprenyl-pyrophosphoryl-MurNAc-(pentapeptide)GlcNAc (lipid intermediate II). This is UDP-N-acetylglucosamine--N-acetylmuramyl-(pentapeptide) pyrophosphoryl-undecaprenol N-acetylglucosamine transferase from Burkholderia orbicola (strain MC0-3).